The sequence spans 127 residues: uncharacterized protein (127 aa).

The signal sequence occupies residues 1-16 (MIKKIIFGIAILLSLS). C17 is lipidated: N-palmitoyl cysteine. The S-diacylglycerol cysteine moiety is linked to residue C17. Positions 56 to 101 (EVRKEIQEYRVEIVDINKKKRELYNSLSKEAQNFLAEQQKYKQKLS) form a coiled coil. Positions 101 to 127 (SISKLPTEDDSPNNTANSKDNKDTDTK) are disordered.

Its subcellular location is the cell membrane. This is an uncharacterized protein from Rickettsia felis (strain ATCC VR-1525 / URRWXCal2) (Rickettsia azadi).